The following is an 898-amino-acid chain: Nitrate reductase [NAD(P)H] (898 aa).

Over residues 1 to 15 (MAASVENRRFTHHEP) the composition is skewed to basic and acidic residues. The interval 1–65 (MAASVENRRF…SSSEDENEND (65 aa)) is disordered. Position 180 (Cys-180) interacts with Mo-molybdopterin. Residues 528 to 603 (SKMFSMSEVK…LEDYRIGELI (76 aa)) form the Cytochrome b5 heme-binding domain. Residues His-563 and His-586 each contribute to the heme site. Residues 642–754 (GAKIPTKLVY…KGPLGHVEYT (113 aa)) enclose the FAD-binding FR-type domain. Residues 694-697 (RAYT), 711-715 (VVKIY), Phe-716, Phe-723, 728-730 (LMS), and Thr-781 contribute to the FAD site.

Belongs to the nitrate reductase family. Homodimer. Requires FAD as cofactor. The cofactor is heme. Mo-molybdopterin is required as a cofactor.

It catalyses the reaction nitrite + NAD(+) + H2O = nitrate + NADH + H(+). It carries out the reaction nitrite + NADP(+) + H2O = nitrate + NADPH + H(+). Its function is as follows. Nitrate reductase is a key enzyme involved in the first step of nitrate assimilation in plants, fungi and bacteria. The polypeptide is Nitrate reductase [NAD(P)H] (NIA1) (Betula pendula (European white birch)).